A 153-amino-acid polypeptide reads, in one-letter code: Peptide deformylase (153 aa).

2 residues coordinate Fe cation: Cys-87 and His-129. Glu-130 is an active-site residue. His-133 is a Fe cation binding site.

It belongs to the polypeptide deformylase family. Requires Fe(2+) as cofactor.

It catalyses the reaction N-terminal N-formyl-L-methionyl-[peptide] + H2O = N-terminal L-methionyl-[peptide] + formate. Its function is as follows. Removes the formyl group from the N-terminal Met of newly synthesized proteins. Requires at least a dipeptide for an efficient rate of reaction. N-terminal L-methionine is a prerequisite for activity but the enzyme has broad specificity at other positions. The polypeptide is Peptide deformylase (Dictyoglomus turgidum (strain DSM 6724 / Z-1310)).